Reading from the N-terminus, the 873-residue chain is Alanine--tRNA ligase (873 aa).

4 residues coordinate Zn(2+): His-562, His-566, Cys-664, and His-668.

The protein belongs to the class-II aminoacyl-tRNA synthetase family. It depends on Zn(2+) as a cofactor.

The protein resides in the cytoplasm. The enzyme catalyses tRNA(Ala) + L-alanine + ATP = L-alanyl-tRNA(Ala) + AMP + diphosphate. Its function is as follows. Catalyzes the attachment of alanine to tRNA(Ala) in a two-step reaction: alanine is first activated by ATP to form Ala-AMP and then transferred to the acceptor end of tRNA(Ala). Also edits incorrectly charged Ser-tRNA(Ala) and Gly-tRNA(Ala) via its editing domain. This is Alanine--tRNA ligase from Photobacterium profundum (strain SS9).